The sequence spans 317 residues: Vacuolar arginine/histidine antiporter YPQ2 (317 aa).

The Vacuolar segment spans residues 1–13 (MSCSNGIWPTVSN). Residues 8–71 (WPTVSNLCGS…AKLTGQLLFQ (64 aa)) form the PQ-loop 1 domain. A helical transmembrane segment spans residues 14-34 (LCGSLSFFTSVISLFPQIIET). At 35 to 39 (YRDKS) the chain is on the cytoplasmic side. The chain crosses the membrane as a helical span at residues 40–62 (VDGLSPYFLLAWLCGDITSLIGA). Over 63–71 (KLTGQLLFQ) the chain is Vacuolar. Residues 72–94 (ILLAIYFLLNDSFVCGQYYYYGV) form a helical membrane-spanning segment. Over 95 to 143 (LHENKLATVGHEPKPLLPELVENGELLREEEDMIQGGSSAESPRSSRRR) the chain is Cytoplasmic. Serine 136 is subject to Phosphoserine. A helical membrane pass occupies residues 144–164 (SAITAALAIAHTISTASAYPL). At 165 to 184 (NVGSTQSQVGPPGDGKNSQL) the chain is on the vacuolar side. A helical membrane pass occupies residues 185–205 (GTILSWIGASFYVGARIPQLI). Residues 185 to 247 (GTILSWIGAS…SCRFLDNQNK (63 aa)) enclose the PQ-loop 2 domain. Residues 206–215 (KNYNRKSTDG) are Cytoplasmic-facing. The helical transmembrane segment at 216–236 (LSPFLFATTLLCNITYNLSIF) threads the bilayer. Residues 237–249 (TSCRFLDNQNKRE) lie on the Vacuolar side of the membrane. Residues 250–270 (FIVNELPFIFGSAGTIAFDLI) form a helical membrane-spanning segment. At 271-317 (YFYQYYILYATDMQLRELERELYSPEEDSAAQLVTERTSLLSGETQT) the chain is on the cytoplasmic side.

This sequence belongs to the laat-1 family.

The protein resides in the vacuole membrane. The enzyme catalyses L-histidine(out) + L-arginine(in) = L-histidine(in) + L-arginine(out). Functionally, amino acid transporter that moves arginine across the vacuolar membrane. Active during nitrogen starvation when it exports stored vacuolar arginine to the cytosol, for use as a nitrogen source. Has been shown to function as an arginine/histidine antiporter when substrate is present on both sides of the membrane, but may also function as a uniporter. In Saccharomyces cerevisiae (strain ATCC 204508 / S288c) (Baker's yeast), this protein is Vacuolar arginine/histidine antiporter YPQ2 (YPQ2).